We begin with the raw amino-acid sequence, 77 residues long: U8-lycotoxin-Ls1o (77 aa).

An N-terminal signal peptide occupies residues 1-20 (MKLMIFTGLVLFAIVSLIEA). A propeptide spanning residues 21 to 26 (QAENGK) is cleaved from the precursor.

This sequence belongs to the neurotoxin 19 (CSTX) family. 08 (U8-Lctx) subfamily. Contains 4 disulfide bonds. In terms of tissue distribution, expressed by the venom gland.

The protein resides in the secreted. In Lycosa singoriensis (Wolf spider), this protein is U8-lycotoxin-Ls1o.